The chain runs to 479 residues: Protein TRIGALACTOSYLDIACYLGLYCEROL 4, chloroplastic (479 aa).

At 288–310 the chain is embedded in the membrane; the sequence is VFLSSPHVAVSGIIGSVMTAAFG.

Homodimer. Forms dimeric beta-barrel. Interacts with TGD5.

The protein resides in the plastid. It is found in the chloroplast outer membrane. The protein localises to the endoplasmic reticulum. Functionally, involved in lipid transfer from the endoplasmic reticulum (ER) to plastids. Specifically binds phosphatidic acid (PtdOH). The sequence is that of Protein TRIGALACTOSYLDIACYLGLYCEROL 4, chloroplastic from Arabidopsis thaliana (Mouse-ear cress).